A 251-amino-acid polypeptide reads, in one-letter code: Ubiquinone/menaquinone biosynthesis C-methyltransferase UbiE (251 aa).

S-adenosyl-L-methionine-binding positions include T74, D95, and 123–124 (NA).

The protein belongs to the class I-like SAM-binding methyltransferase superfamily. MenG/UbiE family.

It catalyses the reaction a 2-demethylmenaquinol + S-adenosyl-L-methionine = a menaquinol + S-adenosyl-L-homocysteine + H(+). It carries out the reaction a 2-methoxy-6-(all-trans-polyprenyl)benzene-1,4-diol + S-adenosyl-L-methionine = a 5-methoxy-2-methyl-3-(all-trans-polyprenyl)benzene-1,4-diol + S-adenosyl-L-homocysteine + H(+). Its pathway is quinol/quinone metabolism; menaquinone biosynthesis; menaquinol from 1,4-dihydroxy-2-naphthoate: step 2/2. The protein operates within cofactor biosynthesis; ubiquinone biosynthesis. Methyltransferase required for the conversion of demethylmenaquinol (DMKH2) to menaquinol (MKH2) and the conversion of 2-polyprenyl-6-methoxy-1,4-benzoquinol (DDMQH2) to 2-polyprenyl-3-methyl-6-methoxy-1,4-benzoquinol (DMQH2). The polypeptide is Ubiquinone/menaquinone biosynthesis C-methyltransferase UbiE (Shewanella frigidimarina (strain NCIMB 400)).